The sequence spans 64 residues: Large ribosomal subunit protein bL35 (64 aa).

Positions 1–28 (MPKVKTKSGAKKRFKLTGSGKIKRKSAY) are disordered.

This sequence belongs to the bacterial ribosomal protein bL35 family.

This is Large ribosomal subunit protein bL35 from Cytophaga hutchinsonii (strain ATCC 33406 / DSM 1761 / CIP 103989 / NBRC 15051 / NCIMB 9469 / D465).